The chain runs to 382 residues: Lipid-A-disaccharide synthase (382 aa).

It belongs to the LpxB family.

The catalysed reaction is 2-N,3-O-bis[(3R)-3-hydroxytetradecanoyl]-alpha-D-glucosaminyl 1-phosphate + UDP-2-N,3-O-bis[(3R)-3-hydroxytetradecanoyl]-alpha-D-glucosamine = lipid A disaccharide (E. coli) + UDP + H(+). It carries out the reaction a lipid X + a UDP-2-N,3-O-bis[(3R)-3-hydroxyacyl]-alpha-D-glucosamine = a lipid A disaccharide + UDP + H(+). It participates in glycolipid biosynthesis; lipid IV(A) biosynthesis; lipid IV(A) from (3R)-3-hydroxytetradecanoyl-[acyl-carrier-protein] and UDP-N-acetyl-alpha-D-glucosamine: step 5/6. In terms of biological role, condensation of UDP-2,3-diacylglucosamine and 2,3-diacylglucosamine-1-phosphate to form lipid A disaccharide, a precursor of lipid A, a phosphorylated glycolipid that anchors the lipopolysaccharide to the outer membrane of the cell. The protein is Lipid-A-disaccharide synthase of Shigella boydii serotype 18 (strain CDC 3083-94 / BS512).